We begin with the raw amino-acid sequence, 319 residues long: RWD domain-containing protein 2B (319 aa).

Residues 41-165 (SELDLLASMF…EWVREHASGY (125 aa)) form the RWD domain. At S275 the chain carries Phosphoserine.

The chain is RWD domain-containing protein 2B (RWDD2B) from Pongo abelii (Sumatran orangutan).